Here is a 388-residue protein sequence, read N- to C-terminus: Mitochondrial distribution and morphology protein 12 (388 aa).

One can recognise an SMP-LTD domain in the interval 1 to 388 (MSLDINWSLL…VFPNFHTVAL (388 aa)). 2 disordered regions span residues 75–101 (DDEG…RNEA) and 209–251 (PMSI…SSSS). The span at 83 to 101 (EEKQREKEREERDKLRNEA) shows a compositional bias: basic and acidic residues. Residues 234-243 (PSPPAHPAGL) are compositionally biased toward pro residues.

This sequence belongs to the MDM12 family. In terms of assembly, component of the ER-mitochondria encounter structure (ERMES) or MDM complex, composed of MMM1, MDM10, MDM12 and MDM34. An MMM1 homodimer associates with one molecule of MDM12 on each side in a pairwise head-to-tail manner, and the SMP-LTD domains of MMM1 and MDM12 generate a continuous hydrophobic tunnel for phospholipid trafficking.

It is found in the mitochondrion outer membrane. It localises to the endoplasmic reticulum membrane. In terms of biological role, component of the ERMES/MDM complex, which serves as a molecular tether to connect the endoplasmic reticulum (ER) and mitochondria. Components of this complex are involved in the control of mitochondrial shape and protein biogenesis, and function in nonvesicular lipid trafficking between the ER and mitochondria. MDM12 is required for the interaction of the ER-resident membrane protein MMM1 and the outer mitochondrial membrane-resident beta-barrel protein MDM10. The MDM12-MMM1 subcomplex functions in the major beta-barrel assembly pathway that is responsible for biogenesis of all mitochondrial outer membrane beta-barrel proteins, and acts in a late step after the SAM complex. The MDM10-MDM12-MMM1 subcomplex further acts in the TOM40-specific pathway after the action of the MDM12-MMM1 complex. Essential for establishing and maintaining the structure of mitochondria and maintenance of mtDNA nucleoids. This Cryptococcus neoformans var. neoformans serotype D (strain B-3501A) (Filobasidiella neoformans) protein is Mitochondrial distribution and morphology protein 12.